A 59-amino-acid polypeptide reads, in one-letter code: Ferredoxin-2 (59 aa).

2 4Fe-4S ferredoxin-type domains span residues 3-32 (YSVI…LQNG) and 33-59 (KAVP…AIVE). Residues Cys12, Cys15, Cys18, Cys22, Cys42, Cys45, Cys48, and Cys52 each coordinate [4Fe-4S] cluster.

In terms of assembly, homodimer. It depends on [4Fe-4S] cluster as a cofactor.

It is found in the periplasm. Ferredoxins are iron-sulfur proteins that transfer electrons in a wide variety of metabolic reactions. This chain is Ferredoxin-2, found in Desulfomicrobium norvegicum (strain DSM 1741 / NCIMB 8310) (Desulfovibrio baculatus (strain Norway 4)).